The following is a 261-amino-acid chain: Triosephosphate isomerase (261 aa).

10-12 is a binding site for substrate; that stretch reads NWK. Catalysis depends on His100, which acts as the Electrophile. The active-site Proton acceptor is Glu172. Residues Gly178, Ser218, and 239–240 contribute to the substrate site; that span reads GG.

Belongs to the triosephosphate isomerase family. Homodimer.

The protein resides in the cytoplasm. The enzyme catalyses D-glyceraldehyde 3-phosphate = dihydroxyacetone phosphate. It functions in the pathway carbohydrate biosynthesis; gluconeogenesis. Its pathway is carbohydrate degradation; glycolysis; D-glyceraldehyde 3-phosphate from glycerone phosphate: step 1/1. Its function is as follows. Involved in the gluconeogenesis. Catalyzes stereospecifically the conversion of dihydroxyacetone phosphate (DHAP) to D-glyceraldehyde-3-phosphate (G3P). In Rhodococcus jostii (strain RHA1), this protein is Triosephosphate isomerase.